A 414-amino-acid polypeptide reads, in one-letter code: Gamma-glutamyl phosphate reductase (414 aa).

The protein belongs to the gamma-glutamyl phosphate reductase family.

It localises to the cytoplasm. The catalysed reaction is L-glutamate 5-semialdehyde + phosphate + NADP(+) = L-glutamyl 5-phosphate + NADPH + H(+). It functions in the pathway amino-acid biosynthesis; L-proline biosynthesis; L-glutamate 5-semialdehyde from L-glutamate: step 2/2. In terms of biological role, catalyzes the NADPH-dependent reduction of L-glutamate 5-phosphate into L-glutamate 5-semialdehyde and phosphate. The product spontaneously undergoes cyclization to form 1-pyrroline-5-carboxylate. The chain is Gamma-glutamyl phosphate reductase from Clostridium beijerinckii (strain ATCC 51743 / NCIMB 8052) (Clostridium acetobutylicum).